The sequence spans 179 residues: ATP synthase subunit delta (179 aa).

This sequence belongs to the ATPase delta chain family. In terms of assembly, F-type ATPases have 2 components, F(1) - the catalytic core - and F(0) - the membrane proton channel. F(1) has five subunits: alpha(3), beta(3), gamma(1), delta(1), epsilon(1). F(0) has three main subunits: a(1), b(2) and c(10-14). The alpha and beta chains form an alternating ring which encloses part of the gamma chain. F(1) is attached to F(0) by a central stalk formed by the gamma and epsilon chains, while a peripheral stalk is formed by the delta and b chains.

Its subcellular location is the cell membrane. Functionally, f(1)F(0) ATP synthase produces ATP from ADP in the presence of a proton or sodium gradient. F-type ATPases consist of two structural domains, F(1) containing the extramembraneous catalytic core and F(0) containing the membrane proton channel, linked together by a central stalk and a peripheral stalk. During catalysis, ATP synthesis in the catalytic domain of F(1) is coupled via a rotary mechanism of the central stalk subunits to proton translocation. This protein is part of the stalk that links CF(0) to CF(1). It either transmits conformational changes from CF(0) to CF(1) or is implicated in proton conduction. This Natranaerobius thermophilus (strain ATCC BAA-1301 / DSM 18059 / JW/NM-WN-LF) protein is ATP synthase subunit delta.